Consider the following 20-residue polypeptide: Hemocyanin subunit II (20 aa).

Residues 1 to 20 (DVVASSTAHKQQDINHLLDK) are disordered. Over residues 10–20 (KQQDINHLLDK) the composition is skewed to basic and acidic residues.

It belongs to the tyrosinase family. Hemocyanin subfamily. As to quaternary structure, composed of 3 major subunits (IB, II and III) and 1 minor subunit (IA) which form homohexamers and heterohexamers. May also form larger structures. As to expression, hemolymph.

The protein resides in the secreted. The protein localises to the extracellular space. Its function is as follows. Hemocyanins are copper-containing oxygen carriers occurring freely dissolved in the hemolymph of many mollusks and arthropods. The protein is Hemocyanin subunit II of Panulirus japonicus (Japanese spiny lobster).